A 481-amino-acid chain; its full sequence is Phenylalanine--tRNA ligase alpha subunit (481 aa).

L-phenylalanine-binding positions include threonine 322, 361–363 (QLE), and tyrosine 401. Glutamate 403 contacts Mg(2+). Position 426 (phenylalanine 426) interacts with L-phenylalanine.

Belongs to the class-II aminoacyl-tRNA synthetase family. Phe-tRNA synthetase alpha subunit type 2 subfamily. In terms of assembly, tetramer of two alpha and two beta subunits. It depends on Mg(2+) as a cofactor.

The protein resides in the cytoplasm. The catalysed reaction is tRNA(Phe) + L-phenylalanine + ATP = L-phenylalanyl-tRNA(Phe) + AMP + diphosphate + H(+). This Methanoculleus marisnigri (strain ATCC 35101 / DSM 1498 / JR1) protein is Phenylalanine--tRNA ligase alpha subunit.